The chain runs to 420 residues: MSGYSPLSSGPADVHIGKAGFFSSVINLANTILGAGILSLPNAFTKTGLLFGCLTIVFSAFASFLGLYFVSQCAARLPRGKASFAAVAKHTFPSLAVVFDASIAVKCFGVAVSYLVIVGDLMPQIAPSLGLSSPMFLRRQTWIVFALFVLTPLSFLKRLDSLRHTSVISLIALCYLVFIVLYHFIIGDTVKGEIRYFVPESGFGYLSVLPVFVFGFTCHQNAFSVINEVRNFSQGFVNFTMFTAIISSTLLYLLVAITGYLSFGSLASGNIIAMYDNTSIWIIGGKLAIVVLVLFSYPLQCHPCRNSVYQAIRRSYSAHDMSDGYHAVITLCILLFTHSLALLLSSLEMVLAFVGSTGSTFISFILPGSLYYFFSHKVASPGNSSPLQLRISRAFAAGLAIYGTVVMILCLNINIAKLSH.

The Cytoplasmic portion of the chain corresponds to 1–19 (MSGYSPLSSGPADVHIGKA). A helical transmembrane segment spans residues 20 to 40 (GFFSSVINLANTILGAGILSL). Over 41–49 (PNAFTKTGL) the chain is Vacuolar. Residues 50–70 (LFGCLTIVFSAFASFLGLYFV) traverse the membrane as a helical segment. Over 71–96 (SQCAARLPRGKASFAAVAKHTFPSLA) the chain is Cytoplasmic. The helical transmembrane segment at 97–117 (VVFDASIAVKCFGVAVSYLVI) threads the bilayer. Over 118-141 (VGDLMPQIAPSLGLSSPMFLRRQT) the chain is Vacuolar. Residues 142 to 162 (WIVFALFVLTPLSFLKRLDSL) traverse the membrane as a helical segment. At 163-166 (RHTS) the chain is on the cytoplasmic side. A helical transmembrane segment spans residues 167–187 (VISLIALCYLVFIVLYHFIIG). Residues 188–195 (DTVKGEIR) lie on the Vacuolar side of the membrane. Residues 196-216 (YFVPESGFGYLSVLPVFVFGF) form a helical membrane-spanning segment. Residues 217–240 (TCHQNAFSVINEVRNFSQGFVNFT) lie on the Cytoplasmic side of the membrane. The chain crosses the membrane as a helical span at residues 241–261 (MFTAIISSTLLYLLVAITGYL). At 262-278 (SFGSLASGNIIAMYDNT) the chain is on the vacuolar side. The helical transmembrane segment at 279–299 (SIWIIGGKLAIVVLVLFSYPL) threads the bilayer. Residues 300 to 326 (QCHPCRNSVYQAIRRSYSAHDMSDGYH) lie on the Cytoplasmic side of the membrane. The helical transmembrane segment at 327-347 (AVITLCILLFTHSLALLLSSL) threads the bilayer. Residues 348-349 (EM) are Vacuolar-facing. The helical transmembrane segment at 350–370 (VLAFVGSTGSTFISFILPGSL) threads the bilayer. At 371-394 (YYFFSHKVASPGNSSPLQLRISRA) the chain is on the cytoplasmic side. A helical membrane pass occupies residues 395 to 415 (FAAGLAIYGTVVMILCLNINI). At 416-420 (AKLSH) the chain is on the vacuolar side.

It belongs to the amino acid/polyamine transporter 2 family.

The protein resides in the vacuole membrane. Functionally, vacuolar amino acid transporter involved in the vacuolar uptake of histidine, glutamate, tyrosine, arginine, lysine, and serine. Required for sporulation. In Schizosaccharomyces pombe (strain 972 / ATCC 24843) (Fission yeast), this protein is Vacuolar amino acid transporter 5 (avt5).